Reading from the N-terminus, the 264-residue chain is Type III pantothenate kinase (264 aa).

6–13 provides a ligand contact to ATP; the sequence is DVGNTNIK. 108-111 contacts substrate; the sequence is GSDR. Asp-110 functions as the Proton acceptor in the catalytic mechanism. Thr-134 contributes to the ATP binding site.

The protein belongs to the type III pantothenate kinase family. In terms of assembly, homodimer. The cofactor is NH4(+). K(+) is required as a cofactor.

Its subcellular location is the cytoplasm. The enzyme catalyses (R)-pantothenate + ATP = (R)-4'-phosphopantothenate + ADP + H(+). It participates in cofactor biosynthesis; coenzyme A biosynthesis; CoA from (R)-pantothenate: step 1/5. Functionally, catalyzes the phosphorylation of pantothenate (Pan), the first step in CoA biosynthesis. The chain is Type III pantothenate kinase from Ehrlichia canis (strain Jake).